The following is a 424-amino-acid chain: Zinc finger protein 597 (424 aa).

Residues 14–88 (ILFEDLAVYF…KYPIAAPLVP (75 aa)) enclose the KRAB domain. 4 consecutive C2H2-type zinc fingers follow at residues 156–178 (YKCP…QKIH), 184–206 (HKCG…RRIH), 212–234 (YKCA…MNSH), and 240–262 (YTCS…QKSH). A Glycyl lysine isopeptide (Lys-Gly) (interchain with G-Cter in SUMO2) cross-link involves residue K300. 3 consecutive C2H2-type zinc fingers follow at residues 341-363 (LQCP…QNIH), 369-391 (HKCK…QKSH), and 397-419 (FKCT…KRTH).

This sequence belongs to the krueppel C2H2-type zinc-finger protein family.

Its subcellular location is the nucleus. Its function is as follows. May be involved in transcriptional regulation. The chain is Zinc finger protein 597 (ZNF597) from Homo sapiens (Human).